Reading from the N-terminus, the 257-residue chain is Ribonuclease HII (257 aa).

Positions 70-257 (EFIAGIDEVG…PIKSMVAGGN (188 aa)) constitute an RNase H type-2 domain. A divalent metal cation is bound by residues aspartate 76, glutamate 77, and aspartate 168.

It belongs to the RNase HII family. Mn(2+) is required as a cofactor. The cofactor is Mg(2+).

The protein resides in the cytoplasm. It carries out the reaction Endonucleolytic cleavage to 5'-phosphomonoester.. In terms of biological role, endonuclease that specifically degrades the RNA of RNA-DNA hybrids. The polypeptide is Ribonuclease HII (Streptococcus suis (strain 98HAH33)).